We begin with the raw amino-acid sequence, 63 residues long: Metallothionein-2 (63 aa).

The interval Met1–Cys30 is beta. The a divalent metal cation site is built by Cys6, Cys8, Cys14, Cys16, Cys20, Cys22, Cys25, Cys27, Cys30, Cys34, Cys35, Cys37, Cys38, Cys42, Cys45, Cys49, Cys51, Cys59, Cys61, and Cys62. Residues Arg31–His63 are alpha.

It belongs to the metallothionein superfamily. Type 1 family.

Its function is as follows. Metallothioneins have a high content of cysteine residues that bind various heavy metals. The chain is Metallothionein-2 from Columba livia (Rock dove).